The following is a 390-amino-acid chain: Delta-aminolevulinic acid dehydratase, chloroplastic (390 aa).

A chloroplast-targeting transit peptide spans 1 to 24 (MQMMQRNVVGQRPVAGSRRSLVVA). The tract at residues 34–69 (VSTNGKHRTGVPEGTPIVTPQDLPSRPRRNRRSESF) is disordered. Lys251 acts as the Schiff-base intermediate with substrate in catalysis. 5-aminolevulinate is bound by residues Arg261 and Lys281. Glu297 serves as a coordination point for Mg(2+). Lys312 acts as the Schiff-base intermediate with substrate in catalysis. 5-aminolevulinate contacts are provided by Ser338 and Tyr377.

It belongs to the ALAD family. Homooctamer. It depends on Mg(2+) as a cofactor.

Its subcellular location is the plastid. The protein localises to the chloroplast. The enzyme catalyses 2 5-aminolevulinate = porphobilinogen + 2 H2O + H(+). It participates in porphyrin-containing compound metabolism; protoporphyrin-IX biosynthesis; coproporphyrinogen-III from 5-aminolevulinate: step 1/4. Catalyzes an early step in the biosynthesis of tetrapyrroles. Binds two molecules of 5-aminolevulinate per subunit, each at a distinct site, and catalyzes their condensation to form porphobilinogen. This is Delta-aminolevulinic acid dehydratase, chloroplastic (HEMB) from Chlamydomonas reinhardtii (Chlamydomonas smithii).